Here is a 265-residue protein sequence, read N- to C-terminus: Serine protease harobin (265 aa).

The signal sequence occupies residues Met1–Gly18. A propeptide spanning residues Lys19–Arg33 is cleaved from the precursor. The region spanning Ile34–Ala257 is the Peptidase S1 domain. 7 cysteine pairs are disulfide-bonded: Cys40/Cys172, Cys59/Cys75, Cys106/Cys152, Cys107/Cys264, Cys151/Cys218, Cys183/Cys197, and Cys208/Cys233. The active-site Charge relay system is the His74. Asn112 carries N-linked (GlcNAc...) asparagine glycosylation. The Charge relay system role is filled by Asp119. The N-linked (GlcNAc...) asparagine glycan is linked to Asn130. Ser212 functions as the Charge relay system in the catalytic mechanism.

It belongs to the peptidase S1 family. Snake venom subfamily. As to quaternary structure, monomer. Post-translationally, harobin contains three additional Cys residues than other snake venom serine proteases, suggesting an additional disulfide bond. In addition, it is more stable than other snake 6-disulfide-bond serine proteases, since it is less sensitive to DTT. In terms of tissue distribution, expressed by the venom gland.

The protein localises to the secreted. With respect to regulation, inhibited by PMSF. Functionally, serine protein with fibrinolytic and fibrinogenolytic activities. Degrades Bbeta-chain (FGB) of fibrinogen first and then the Aalpha-chain (FGA). Gamma-chain (FGG) are also digested on prolonged incubation. In vitro, it cleaves high molecular weight (HMW) kininogen (KNG) releasing bradykinin that promotes vasodilation. In vitro and in vivo, it cleaves angiotensin-2 (AGT). This explains the reduction of blood pressure in hypertensive rats. Also has antithrombotic effects on thrombosis animal models. In Hydrophis hardwickii (Hardwick's spine-bellied seasnake), this protein is Serine protease harobin.